The chain runs to 326 residues: MKTIRTGMMTLAALAVLGTNVVSATSEPVKELSVNVNGQHIEQAAIFDKGQQTVLVPLRDVAESLGFQVKWNAETKAAEVNKGAIFSYAKVGEDRYPFAKMYKTLGAEPRLLNGNTYVPVAFVDEILQAEVNVTDDAVTVVDEESDVAPVRTGTITTLNKREDGGVSFQLNGYETGIILHVDKETKITTADGKELKPEDLQLGMEVEATHQKFMAMSMPQSGAVSIVVKSGLETPEVLGTAGKVASIDKDQEGSYKMLVEGQALAENAPEKVALIVGKDTKIVSAKDNKELAPEDLKAEMKVFAYYGPKLTRSLPPIGVAEKIVVE.

Positions 1–24 (MKTIRTGMMTLAALAVLGTNVVSA) are cleaved as a signal peptide. Tandem repeats lie at residues 177–208 (IILH…EVEA) and 272–304 (VALI…KVFA). Positions 177-304 (IILHVDKETK…DLKAEMKVFA (128 aa)) are 2 X 32 AA approximate repeats.

Proteolytically cleaved to yield at least three forms (BBRPI-A, -B, and -C).

It is found in the secreted. In terms of biological role, shows inhibitory activity towards serine proteases, such as trypsin, chymotrypsin and subtilisin. May form a trypsin-inhibitor complex in a molar ratio of 1:1. This Brevibacillus choshinensis protein is Protease inhibitor.